We begin with the raw amino-acid sequence, 350 residues long: uncharacterized protein (350 aa).

Positions 197–212 are enriched in basic and acidic residues; it reads KNDNSEDNRSEDDLKS. A disordered region spans residues 197-217; the sequence is KNDNSEDNRSEDDLKSSQDPV.

It is found in the plastid. The protein resides in the chloroplast. This is an uncharacterized protein from Euglena gracilis.